The chain runs to 986 residues: Bifunctional glutamine synthetase adenylyltransferase/adenylyl-removing enzyme (986 aa).

Positions 1-473 are adenylyl removase; it reads MTSSAPGNAD…HYARLFEGDP (473 aa). Positions 478-986 are adenylyl transferase; it reads SLPPVNYGAG…RRVFTALLER (509 aa).

It belongs to the GlnE family. It depends on Mg(2+) as a cofactor.

The catalysed reaction is [glutamine synthetase]-O(4)-(5'-adenylyl)-L-tyrosine + phosphate = [glutamine synthetase]-L-tyrosine + ADP. It carries out the reaction [glutamine synthetase]-L-tyrosine + ATP = [glutamine synthetase]-O(4)-(5'-adenylyl)-L-tyrosine + diphosphate. Involved in the regulation of glutamine synthetase GlnA, a key enzyme in the process to assimilate ammonia. When cellular nitrogen levels are high, the C-terminal adenylyl transferase (AT) inactivates GlnA by covalent transfer of an adenylyl group from ATP to specific tyrosine residue of GlnA, thus reducing its activity. Conversely, when nitrogen levels are low, the N-terminal adenylyl removase (AR) activates GlnA by removing the adenylyl group by phosphorolysis, increasing its activity. The regulatory region of GlnE binds the signal transduction protein PII (GlnB) which indicates the nitrogen status of the cell. The sequence is that of Bifunctional glutamine synthetase adenylyltransferase/adenylyl-removing enzyme from Bradyrhizobium sp. (strain ORS 278).